Here is a 186-residue protein sequence, read N- to C-terminus: Elongation factor P (186 aa).

The protein belongs to the elongation factor P family.

It is found in the cytoplasm. Its pathway is protein biosynthesis; polypeptide chain elongation. Functionally, involved in peptide bond synthesis. Stimulates efficient translation and peptide-bond synthesis on native or reconstituted 70S ribosomes in vitro. Probably functions indirectly by altering the affinity of the ribosome for aminoacyl-tRNA, thus increasing their reactivity as acceptors for peptidyl transferase. The protein is Elongation factor P of Neisseria gonorrhoeae (strain NCCP11945).